The sequence spans 434 residues: Guanosine-inosine kinase (434 aa).

GMP contacts are provided by residues 40-45, 93-97, and R198; these read DQTLVD and GTIGN. ATP is bound by residues 284 to 289, G357, and N402; that span reads TAGPIG.

It belongs to the carbohydrate kinase PfkB family. Mg(2+) is required as a cofactor.

The enzyme catalyses guanosine + ATP = GMP + ADP + H(+). It carries out the reaction inosine + ATP = IMP + ADP + H(+). The protein operates within purine metabolism; IMP biosynthesis via salvage pathway; IMP from inosine: step 1/1. It functions in the pathway purine metabolism; GMP biosynthesis via salvage pathway. In terms of biological role, catalyzes the phosphorylation of guanosine and inosine to GMP and IMP, respectively. In Escherichia coli O157:H7, this protein is Guanosine-inosine kinase.